The primary structure comprises 79 residues: Acyl carrier protein (79 aa).

Residues 2–77 (DNIEQRVKKI…LAIDFAKSKA (76 aa)) enclose the Carrier domain. Ser37 carries the post-translational modification O-(pantetheine 4'-phosphoryl)serine.

This sequence belongs to the acyl carrier protein (ACP) family. 4'-phosphopantetheine is transferred from CoA to a specific serine of apo-ACP by AcpS. This modification is essential for activity because fatty acids are bound in thioester linkage to the sulfhydryl of the prosthetic group.

It is found in the cytoplasm. It functions in the pathway lipid metabolism; fatty acid biosynthesis. Its function is as follows. Carrier of the growing fatty acid chain in fatty acid biosynthesis. The polypeptide is Acyl carrier protein (Polynucleobacter necessarius subsp. necessarius (strain STIR1)).